We begin with the raw amino-acid sequence, 122 residues long: Large ribosomal subunit protein uL14 (122 aa).

Belongs to the universal ribosomal protein uL14 family. In terms of assembly, part of the 50S ribosomal subunit. Forms a cluster with proteins L3 and L19. In the 70S ribosome, L14 and L19 interact and together make contacts with the 16S rRNA in bridges B5 and B8.

Its function is as follows. Binds to 23S rRNA. Forms part of two intersubunit bridges in the 70S ribosome. In Buchnera aphidicola subsp. Acyrthosiphon pisum (strain 5A), this protein is Large ribosomal subunit protein uL14.